The following is a 1144-amino-acid chain: Nitric oxide synthase, inducible (1144 aa).

The DINNN-motif; mediates interaction with SPSB1, SPSB2 and SPSB4 signature appears at 23–27; that stretch reads DINNN. Residues 37–59 are disordered; it reads SPTIQDDPKSHQNGSPQLLTGTA. Positions 47–59 are enriched in polar residues; sequence HQNGSPQLLTGTA. Positions 104 and 109 each coordinate Zn(2+). A (6R)-L-erythro-5,6,7,8-tetrahydrobiopterin-binding site is contributed by S112. C194 contacts heme b. Positions 257, 366, 367, and 371 each coordinate L-arginine. 4 residues coordinate (6R)-L-erythro-5,6,7,8-tetrahydrobiopterin: R375, I456, W457, and F470. Y485 lines the heme b pocket. The calmodulin-binding stretch occupies residues 509–529; it reads FRVLVKVVFFASMLMRKVMAS. The 139-residue stretch at 533 to 671 folds into the Flavodoxin-like domain; it reads ATVLFATETG…AFRSWAVQTF (139 aa). FMN-binding residues include T539, E540, T541, K543, and S544. The residue at position 569 (Y569) is a Phosphotyrosine. 6 residues coordinate FMN: S585, T586, S622, C629, E655, and Q659. Positions 724 to 964 constitute an FAD-binding FR-type domain; sequence KNVFTMRLKS…VRSVSGFQLP (241 aa). R744 lines the NADP(+) pocket. 6 residues coordinate FAD: H766, R900, Y902, S903, T918, and A920. T923 is a binding site for NADP(+). The FAD site is built by Y924, V937, C938, and S939. Residues T978, R1011, S1040, R1041, K1047, Y1049, Q1051, and D1084 each coordinate NADP(+).

The protein belongs to the NOS family. In terms of assembly, homodimer. Interacts with NHERF1. Interacts with GAPDH. Interacts with S100A8 and S100A9 to form the iNOS-S100A8/9 transnitrosylase complex. Interacts with SPSB1, SPSB2 and SPSB4. Interacts with ELOC and CUL5 in the presence of SPSB1 or SPSB2 or SPSB4. Forms a complex with ASL, ASS1 and HSP90AA1; the complex regulates cell-autonomous L-arginine synthesis and citrulline recycling while channeling extracellular L-arginine to nitric oxide synthesis pathway. Requires heme b as cofactor. The cofactor is FAD. FMN is required as a cofactor. It depends on (6R)-L-erythro-5,6,7,8-tetrahydrobiopterin as a cofactor. Post-translationally, polyubiquitinated; mediated by SPSB1, SPSB2 and SPSB4, leading to proteasomal degradation. As to expression, macrophages.

The protein localises to the cytoplasm. It localises to the cytosol. It carries out the reaction 2 L-arginine + 3 NADPH + 4 O2 + H(+) = 2 L-citrulline + 2 nitric oxide + 3 NADP(+) + 4 H2O. Its activity is regulated as follows. Not stimulated by calcium/calmodulin. Aspirin inhibits expression and function of this enzyme and effects may be exerted at the level of translational/post-translational modification and directly on the catalytic activity. Produces nitric oxide (NO) which is a messenger molecule with diverse functions throughout the body. In macrophages, NO mediates tumoricidal and bactericidal actions. Also has nitrosylase activity and mediates cysteine S-nitrosylation of cytoplasmic target proteins such PTGS2/COX2. As component of the iNOS-S100A8/9 transnitrosylase complex involved in the selective inflammatory stimulus-dependent S-nitrosylation of GAPDH implicated in regulation of the GAIT complex activity and probably multiple targets including ANXA5, EZR, MSN and VIM. Involved in inflammation, enhances the synthesis of pro-inflammatory mediators such as IL6 and IL8. The sequence is that of Nitric oxide synthase, inducible (Nos2) from Mus musculus (Mouse).